Reading from the N-terminus, the 430-residue chain is Adenylosuccinate synthetase (430 aa).

Residues G13–K19 and G41–T43 contribute to the GTP site. The active-site Proton acceptor is D14. Mg(2+) contacts are provided by D14 and G41. Residues D14–K17, N39–H42, T130, R144, Q225, T240, and R304 contribute to the IMP site. H42 (proton donor) is an active-site residue. Residue A300–R306 participates in substrate binding. Residues R306, K332–D334, and S414–G416 each bind GTP.

This sequence belongs to the adenylosuccinate synthetase family. In terms of assembly, homodimer. Requires Mg(2+) as cofactor.

It localises to the cytoplasm. It catalyses the reaction IMP + L-aspartate + GTP = N(6)-(1,2-dicarboxyethyl)-AMP + GDP + phosphate + 2 H(+). It functions in the pathway purine metabolism; AMP biosynthesis via de novo pathway; AMP from IMP: step 1/2. Its function is as follows. Plays an important role in the de novo pathway of purine nucleotide biosynthesis. Catalyzes the first committed step in the biosynthesis of AMP from IMP. The protein is Adenylosuccinate synthetase of Pseudomonas syringae pv. tomato (strain ATCC BAA-871 / DC3000).